The following is a 238-amino-acid chain: Capsular polysaccharide phosphotransferase eps5J (238 aa).

The protein belongs to the stealth family.

The chain is Capsular polysaccharide phosphotransferase eps5J (eps5J) from Streptococcus thermophilus.